The primary structure comprises 174 residues: Rubredoxin-2 (174 aa).

The region spanning 1–53 (MAKYQCPDCEYIYDEVAGHPHEGFPPGTSWETIPEEWACPDCAVRDKADFVVI) is the Rubredoxin-like 1 domain. C6, C9, C39, and C42 together coordinate Fe cation. Residues 56 to 65 (GSASPASGAA) are compositionally biased toward low complexity. Positions 56–115 (GSASPASGAATPEVRTATTPPKAEASPQKSTGASTPSANNKAKAKAKAKPARAKSSKDST) are disordered. Residues 97-109 (AKAKAKAKPARAK) are compositionally biased toward basic residues. The Rubredoxin-like 2 domain maps to 121–172 (FRKWICITCGHIYDEALGDETEGFAPGTLFEDIPDDWCCPDCGATKEDYVLH). Positions 126, 129, 159, and 162 each coordinate Fe cation.

The protein belongs to the rubredoxin family. Fe(3+) is required as a cofactor.

It localises to the cytoplasm. The protein operates within hydrocarbon metabolism; alkane degradation. Its function is as follows. Involved in the hydrocarbon hydroxylating system, which transfers electrons from NADH to rubredoxin reductase and then through rubredoxin to alkane 1 monooxygenase. This is Rubredoxin-2 (alkG) from Alcanivorax borkumensis (strain ATCC 700651 / DSM 11573 / NCIMB 13689 / SK2).